Consider the following 60-residue polypeptide: Large ribosomal subunit protein uL30 (60 aa).

This sequence belongs to the universal ribosomal protein uL30 family. As to quaternary structure, part of the 50S ribosomal subunit.

The polypeptide is Large ribosomal subunit protein uL30 (Lysinibacillus sphaericus (strain C3-41)).